A 185-amino-acid polypeptide reads, in one-letter code: Elongation factor P (185 aa).

It belongs to the elongation factor P family.

The protein localises to the cytoplasm. Its pathway is protein biosynthesis; polypeptide chain elongation. Functionally, involved in peptide bond synthesis. Stimulates efficient translation and peptide-bond synthesis on native or reconstituted 70S ribosomes in vitro. Probably functions indirectly by altering the affinity of the ribosome for aminoacyl-tRNA, thus increasing their reactivity as acceptors for peptidyl transferase. The chain is Elongation factor P from Kosmotoga olearia (strain ATCC BAA-1733 / DSM 21960 / TBF 19.5.1).